A 442-amino-acid polypeptide reads, in one-letter code: Membrane sensor protein UhpC (442 aa).

The Cytoplasmic segment spans residues 1-30; sequence MLSFLKAPANAPLITDKHEVDARYRYWRRH. The chain crosses the membrane as a helical span at residues 31-51; the sequence is ILITIWLGYALFYFTRKSFNA. Topologically, residues 52–66 are periplasmic; it reads AAPEILASGILTRSD. A helical transmembrane segment spans residues 67 to 87; it reads IGLLATLFYITYGVSKFVSGI. The Cytoplasmic segment spans residues 88–95; the sequence is VSDRSNAR. Residues 96 to 118 form a helical membrane-spanning segment; sequence YFMGIGLIATGVVNILFGFSTSL. At 119–121 the chain is on the periplasmic side; sequence WAF. Residues 122 to 144 traverse the membrane as a helical segment; the sequence is ALLWALNAFFQGFGSPVCARLLT. The Cytoplasmic segment spans residues 145-162; the sequence is AWYSRTERGGWWALWNTA. Residues 163–183 form a helical membrane-spanning segment; the sequence is HNVGGALIPLVMAAVALHYGW. A topological domain (periplasmic) is located at residue Arg-184. A helical membrane pass occupies residues 185-205; that stretch reads VGMMVAGLLAIGVGMVLCWRL. At 206–244 the chain is on the cytoplasmic side; the sequence is RDRPQAIGLPPVGDWRHDALEVAQQQEGAGLSRKEILAK. Residues 245-265 traverse the membrane as a helical segment; it reads YVLLNPYIWLLSLCYVLVYVV. The Periplasmic segment spans residues 266–289; the sequence is RAAINDWGNLYMSETLGVDLVTAN. The chain crosses the membrane as a helical span at residues 290-310; it reads TAVSMFELGGFIGALVAGWGS. At 311–322 the chain is on the cytoplasmic side; the sequence is DKLFNGNRGPMN. A helical transmembrane segment spans residues 323 to 343; it reads LIFAAGILLSVGSLWLMPFAS. Topologically, residues 344 to 347 are periplasmic; the sequence is YVMQ. A helical membrane pass occupies residues 348–368; that stretch reads AACFFTTGFFVFGPQMLIGMA. Residues 369 to 379 are Cytoplasmic-facing; it reads AAECSHKEAAG. A helical transmembrane segment spans residues 380 to 400; sequence AATGFVGLFAYLGASLSGWPL. Over 401-410 the chain is Periplasmic; it reads AKVLEIWHWT. Residues 411–431 traverse the membrane as a helical segment; sequence GFFAVIAIAAGISALLLLPFL. The Cytoplasmic segment spans residues 432-442; it reads NAQAPRETHEA.

The protein belongs to the major facilitator superfamily. Organophosphate:Pi antiporter (OPA) (TC 2.A.1.4) family.

It is found in the cell inner membrane. Its function is as follows. Part of the UhpABC signaling cascade that controls the expression of the hexose phosphate transporter UhpT. UhpC senses external glucose-6-phosphate and interacts with the histidine kinase UhpB, leading to the stimulation of the autokinase activity of UhpB. The sequence is that of Membrane sensor protein UhpC (uhpC) from Salmonella typhimurium (strain LT2 / SGSC1412 / ATCC 700720).